The following is a 142-amino-acid chain: Thioredoxin-like protein 4A (142 aa).

The cysteines at positions 38 and 79 are disulfide-linked. Serine 132 carries the phosphoserine modification.

Belongs to the DIM1 family. Component of the precatalytic spliceosome (spliceosome B complex). Component of the U5 snRNP complex. Component of the U4/U6-U5 tri-snRNP complex. The U4/U6-U5 tri-snRNP complex is a building block of the precatalytic spliceosome (spliceosome B complex). The U4/U6-U5 tri-snRNP complex is composed of the U4, U6 and U5 snRNAs and at least PRPF3, PRPF4, PRPF6, PRPF8, PRPF31, SNRNP200, TXNL4A, SNRNP40, SNRPB, SNRPD1, SNRPD2, SNRPD3, SNRPE, SNRPF, SNRPG, DDX23, CD2BP2, PPIH, SNU13, EFTUD2, SART1 and USP39, plus LSM2, LSM3, LSM4, LSM5, LSM6, LSM7 and LSM8. Directly interacts with CD2BP2. Interacts with HNRPF, HNRPH2, NEDD9 and PQBP1. Interacts with ERBB4. In terms of processing, the disulfide bond seen in structures determined by X-ray crystallography and NMR is not essential for protein folding and function.

The protein localises to the nucleus. Plays a role in pre-mRNA splicing as component of the U5 snRNP and U4/U6-U5 tri-snRNP complexes that are involved in spliceosome assembly, and as component of the precatalytic spliceosome (spliceosome B complex). In Homo sapiens (Human), this protein is Thioredoxin-like protein 4A (TXNL4A).